We begin with the raw amino-acid sequence, 512 residues long: MLTLMTLIVLVPLLLFLFPHLLLRRQMLLKPYPPGPKGLPVIGNILMMNQFNHRGLAKLSRIYGGLLHLRLGFSHIFVVSSPDIARQVLQVQDHVFSNRPTTIAIRYLTYGGSDLAFCNYGPFWRRMRKLYVMMLFSRKRAESWVSVDEEVHKSVRLVASNVGKPLNICKLAFSLSRDITFRAAFGSSSSTSDESRLDEFLEIIQEFSKLFGEFNVADYVPSWLSWIDPQGINGRVEKARKSLDGFIESVIDDHLHKKKREHDNVDEETDMVDQLLAFYEEEVKVNNSVTKINLDNIKGIIMDVMFGGTETVALAIEWVLTEILRSPENMKRVQDELTSVVGLDRWRVEDTHLEKLTFLKCILKETLRLHPPFPLLLHETVKDTEISGYFIPKGSRVMVNTYALGRDPNSWSDPESFNPGRFLNPIAPDLKGNNFEFVPFGSGRRSCPGMQLGLYAFELAVAHLLHCFTWSLPDGMNPGDVDTVEGPGLTVPKAIPLVAVPTTRLLCPIVVS.

Residues 7–24 (LIVLVPLLLFLFPHLLLR) form a helical membrane-spanning segment. Cysteine 447 is a binding site for heme.

Belongs to the cytochrome P450 family. Heme serves as cofactor. Expressed in seedlings, roots, stems and inflorescence nodes. Low or no expression in leaves, flowers, seeds and lignifying tissue.

The protein resides in the membrane. Cytochrome P450 involved in the production of catechol-substituted substrates needed for the arabidopyrones biosynthesis. Converts p-coumaraldehyde into caffealdehyde. The chain is Cytochrome P450 84A4 (CYP84A4) from Arabidopsis thaliana (Mouse-ear cress).